We begin with the raw amino-acid sequence, 804 residues long: Leucine--tRNA ligase (804 aa).

The 'HIGH' region motif lies at 39–50 (PYPSGAGLHVGH). The 'KMSKS' region signature appears at 580 to 584 (KMSKS). Residue Lys-583 coordinates ATP.

The protein belongs to the class-I aminoacyl-tRNA synthetase family.

The protein localises to the cytoplasm. The catalysed reaction is tRNA(Leu) + L-leucine + ATP = L-leucyl-tRNA(Leu) + AMP + diphosphate. This chain is Leucine--tRNA ligase, found in Mycoplasma capricolum subsp. capricolum (strain California kid / ATCC 27343 / NCTC 10154).